Reading from the N-terminus, the 373-residue chain is tRNA-specific 2-thiouridylase MnmA (373 aa).

ATP contacts are provided by residues 12-19 (GMSGGVDS) and M38. The interaction with target base in tRNA stretch occupies residues 98–100 (NPD). C103 functions as the Nucleophile in the catalytic mechanism. An intrachain disulfide couples C103 to C200. G127 contacts ATP. The interaction with tRNA stretch occupies residues 150-152 (KDQ). The active-site Cysteine persulfide intermediate is the C200. An interaction with tRNA region spans residues 312 to 313 (RY).

This sequence belongs to the MnmA/TRMU family.

It is found in the cytoplasm. It carries out the reaction S-sulfanyl-L-cysteinyl-[protein] + uridine(34) in tRNA + AH2 + ATP = 2-thiouridine(34) in tRNA + L-cysteinyl-[protein] + A + AMP + diphosphate + H(+). Functionally, catalyzes the 2-thiolation of uridine at the wobble position (U34) of tRNA, leading to the formation of s(2)U34. The polypeptide is tRNA-specific 2-thiouridylase MnmA (Streptococcus pneumoniae (strain 70585)).